Here is a 572-residue protein sequence, read N- to C-terminus: Proline--tRNA ligase (572 aa).

The protein belongs to the class-II aminoacyl-tRNA synthetase family. ProS type 1 subfamily. In terms of assembly, homodimer.

It is found in the cytoplasm. The catalysed reaction is tRNA(Pro) + L-proline + ATP = L-prolyl-tRNA(Pro) + AMP + diphosphate. In terms of biological role, catalyzes the attachment of proline to tRNA(Pro) in a two-step reaction: proline is first activated by ATP to form Pro-AMP and then transferred to the acceptor end of tRNA(Pro). As ProRS can inadvertently accommodate and process non-cognate amino acids such as alanine and cysteine, to avoid such errors it has two additional distinct editing activities against alanine. One activity is designated as 'pretransfer' editing and involves the tRNA(Pro)-independent hydrolysis of activated Ala-AMP. The other activity is designated 'posttransfer' editing and involves deacylation of mischarged Ala-tRNA(Pro). The misacylated Cys-tRNA(Pro) is not edited by ProRS. In Klebsiella pneumoniae subsp. pneumoniae (strain ATCC 700721 / MGH 78578), this protein is Proline--tRNA ligase.